A 390-amino-acid polypeptide reads, in one-letter code: Chorismate synthase 2 (390 aa).

Residues Arg39 and Arg45 each coordinate NADP(+). FMN contacts are provided by residues 132–134, 253–254, Gly298, 313–317, and Arg339; these read RSS, NA, and KPIPT.

The protein belongs to the chorismate synthase family. Homotetramer. FMNH2 serves as cofactor.

It carries out the reaction 5-O-(1-carboxyvinyl)-3-phosphoshikimate = chorismate + phosphate. It participates in metabolic intermediate biosynthesis; chorismate biosynthesis; chorismate from D-erythrose 4-phosphate and phosphoenolpyruvate: step 7/7. In terms of biological role, catalyzes the anti-1,4-elimination of the C-3 phosphate and the C-6 proR hydrogen from 5-enolpyruvylshikimate-3-phosphate (EPSP) to yield chorismate, which is the branch point compound that serves as the starting substrate for the three terminal pathways of aromatic amino acid biosynthesis. This reaction introduces a second double bond into the aromatic ring system. The polypeptide is Chorismate synthase 2 (Bacillus thuringiensis (strain Al Hakam)).